Reading from the N-terminus, the 841-residue chain is Protein translocase subunit SecA (841 aa).

Residues 79-80, Gln85, 103-107, and Asp492 contribute to the ATP site; these read MF and GEGKT. Residues 786-813 are disordered; that stretch reads REEVVQGQTTAHQPQEGDDNKKAKKAPV. Cys825, Cys827, Cys836, and Cys837 together coordinate Zn(2+).

This sequence belongs to the SecA family. As to quaternary structure, part of the essential Sec protein translocation apparatus which comprises SecA, SecYEG and auxiliary proteins SecDF. Other proteins may be involved. Monomer and many different homodimers can be isolated, some of which are not formed in the presence of a synthetic signal peptide. A single SecA monomer interacts with SecY in the channel. Only shows some colocalization with FloA or FloT membrane assemblies. It depends on Zn(2+) as a cofactor.

It is found in the cell membrane. Its subcellular location is the cytoplasm. The protein resides in the membrane raft. It carries out the reaction ATP + H2O + cellular proteinSide 1 = ADP + phosphate + cellular proteinSide 2.. Part of the Sec protein translocase complex. Interacts with the SecYEG preprotein conducting channel. Has a central role in coupling the hydrolysis of ATP to the transfer of proteins into and across the cell membrane, serving as an ATP-driven molecular motor driving the stepwise translocation of polypeptide chains across the membrane. The polypeptide is Protein translocase subunit SecA (Bacillus subtilis (strain 168)).